Reading from the N-terminus, the 455-residue chain is uncharacterized protein (455 aa).

The N-terminal stretch at 1–27 (MSQRQQFQFLLSFLILIFLKFIIQIRC) is a signal peptide. The Extracellular segment spans residues 29–434 (ESNGVIIIKN…GDDENLINSS (406 aa)). 4 N-linked (GlcNAc...) asparagine glycosylation sites follow: asparagine 136, asparagine 148, asparagine 210, and asparagine 298. Positions 383 to 402 (SSSTTSTTSSSSSSSSSTTT) are disordered. Residues asparagine 421 and asparagine 432 are each glycosylated (N-linked (GlcNAc...) asparagine). The helical transmembrane segment at 435–455 (SVIKFSTPIIMIIIILINIKF) threads the bilayer.

Its subcellular location is the membrane. This is an uncharacterized protein from Dictyostelium discoideum (Social amoeba).